Reading from the N-terminus, the 118-residue chain is MRHLKSGRKLNRHSSHRLALYRNQAKSLLTHGRITTTVPKAKELRGFVDHLIHLAKRGDLHARRLVLRDLQDVKLVRKLFDEIAPRYRDRQGGYTRVLKLAERRRGDGAPLALVELVE.

The protein belongs to the bacterial ribosomal protein bL17 family. In terms of assembly, part of the 50S ribosomal subunit. Contacts protein L32.

The chain is Large ribosomal subunit protein bL17 from Thermus thermophilus (strain ATCC BAA-163 / DSM 7039 / HB27).